Reading from the N-terminus, the 416-residue chain is S-layer protein B (416 aa).

The first 20 residues, 1 to 20, serve as a signal peptide directing secretion; sequence MKYNLLPLILLSLLVAPLLA. Residues 310–330 adopt a coiled-coil conformation; that stretch reads IASLNSTIQSLESQISSLSST. The chain crosses the membrane as a helical span at residues 392 to 412; sequence IALAVSIIAIIISIVVLILVF.

It belongs to the Sulfolobales SlaB family. The mushroom-shaped unit cells of the Sulfolobales' S-layers may consist of three SlaB subunits and six SlaA subunits.

Its subcellular location is the secreted. The protein localises to the cell wall. It is found in the S-layer. It localises to the cell membrane. In terms of biological role, S-layer small protein. May anchor the complex to the cell membrane. In Metallosphaera sedula (strain ATCC 51363 / DSM 5348 / JCM 9185 / NBRC 15509 / TH2), this protein is S-layer protein B.